The sequence spans 839 residues: DNA (cytosine-5)-methyltransferase CMT3 (839 aa).

Disordered stretches follow at residues 1 to 38 (MAPK…EPVT) and 51 to 86 (LDEP…KTKD). The span at 19-30 (PKPKKRAPKRAK) shows a compositional bias: basic residues. Basic and acidic residues predominate over residues 51–70 (LDEPIPESEAKSTWPDRYKP). Residues 108–227 (QIYELNDDAY…LPYDTFEAIQ (120 aa)) form the BAH domain. The region spanning 269–813 (ATLLDLYSGC…YALGTAFQGL (545 aa)) is the SAM-dependent MTase C5-type domain. The 66-residue stretch at 382-447 (FTVDKIVGIS…LGYKSGILPL (66 aa)) folds into the Chromo domain. Cysteine 460 is an active-site residue.

The protein belongs to the class I-like SAM-binding methyltransferase superfamily. C5-methyltransferase family. In terms of assembly, homodimer. Interacts with HP1 and, through its chromodomain, with the N-terminal tail of histone H3 doubly methylated at 'Lys-9' and 'Lys-27'. Binds to JMJ24. Ubiquitinated by JMJ24, subsequently beingargeted to proteasomal degradation thus initiating the destabilization of the heterochromatic state of endogenous silenced loci.

It is found in the nucleus. The enzyme catalyses a 2'-deoxycytidine in DNA + S-adenosyl-L-methionine = a 5-methyl-2'-deoxycytidine in DNA + S-adenosyl-L-homocysteine + H(+). In terms of biological role, involved in the CpXpG methylation (e.g. CHG cytosine) and in gene silencing. Methylates preferentially transposon-related sequences. Functionally redundant to DRM1/DRM2 to maintain non-CpG methylation. Involved in RNA-directed DNA methylation. The sequence is that of DNA (cytosine-5)-methyltransferase CMT3 from Arabidopsis thaliana (Mouse-ear cress).